Reading from the N-terminus, the 205-residue chain is Basonuclin zinc finger protein homolog (205 aa).

C2H2-type zinc fingers lie at residues 107 to 130 and 135 to 164; these read VACD…SAVH and HTCT…PKLH. Residues 145–168 form a disordered region; sequence QFSSRRSRNRHSSNNNPKLHMPES.

As to expression, expressed in the VA and VB motor neurons and at lower levels in the SABV neuron pair.

It localises to the nucleus. In terms of biological role, probable transcription factor. Involved in motor neuron fate determination and maintenance, acting as a transcriptional repressor to counteract gene activation by transcription factor unc-3 in a subset of motor neurons. Required throughout development to repress transcription by unc-3, probably acting by binding to specific promoter elements. Represses expression of DA and DB motor neuron-specific effector genes, such as unc-129 and unc-53, in VA and VB motor neurons. This chain is Basonuclin zinc finger protein homolog, found in Caenorhabditis elegans.